A 164-amino-acid chain; its full sequence is 6,7-dimethyl-8-ribityllumazine synthase (164 aa).

Residues tyrosine 27, 58–60, and 87–89 each bind 5-amino-6-(D-ribitylamino)uracil; these read ALE and CVI. Residue 92–93 coordinates (2S)-2-hydroxy-3-oxobutyl phosphate; sequence ET. Histidine 95 functions as the Proton donor in the catalytic mechanism. Asparagine 120 is a 5-amino-6-(D-ribitylamino)uracil binding site. Arginine 134 contributes to the (2S)-2-hydroxy-3-oxobutyl phosphate binding site.

Belongs to the DMRL synthase family.

It catalyses the reaction (2S)-2-hydroxy-3-oxobutyl phosphate + 5-amino-6-(D-ribitylamino)uracil = 6,7-dimethyl-8-(1-D-ribityl)lumazine + phosphate + 2 H2O + H(+). Its pathway is cofactor biosynthesis; riboflavin biosynthesis; riboflavin from 2-hydroxy-3-oxobutyl phosphate and 5-amino-6-(D-ribitylamino)uracil: step 1/2. Catalyzes the formation of 6,7-dimethyl-8-ribityllumazine by condensation of 5-amino-6-(D-ribitylamino)uracil with 3,4-dihydroxy-2-butanone 4-phosphate. This is the penultimate step in the biosynthesis of riboflavin. The sequence is that of 6,7-dimethyl-8-ribityllumazine synthase from Methylocella silvestris (strain DSM 15510 / CIP 108128 / LMG 27833 / NCIMB 13906 / BL2).